The following is a 351-amino-acid chain: Putative NBPF family member NBPF5 (351 aa).

2 coiled-coil regions span residues 10 to 43 and 69 to 115; these read SERA…EKFL and DSVL…KLRE. The tract at residues 157 to 285 is disordered; the sequence is HLVHKLSPEN…VPPRHHDKSN (129 aa). Positions 165-179 are enriched in acidic residues; it reads ENDEDEDEDEDDKDE. The 88-residue stretch at 174 to 261 folds into the Olduvai domain; that stretch reads EDDKDEEVEK…EEEEALNIPP (88 aa). The span at 192-202 shows a compositional bias: basic and acidic residues; it reads EVQKTEEKEVP. A compositionally biased stretch (low complexity) spans 214–226; that stretch reads SNSHNPSNSNQPH. Composition is skewed to basic and acidic residues over residues 232-251 and 264-273; these read TFKE…HPHD and QNDHEEEEGK.

It belongs to the NBPF family. As to expression, expressed in brain and medulla.

Its subcellular location is the cytoplasm. The chain is Putative NBPF family member NBPF5 from Homo sapiens (Human).